A 489-amino-acid chain; its full sequence is Fumarate reductase (CoM/CoB) subunit B (489 aa).

The 2Fe-2S ferredoxin-type domain maps to 2 to 89 (INVKVLRFEP…GAVIEPVDLP (88 aa)). C53, C58, C61, and C73 together coordinate [2Fe-2S] cluster. 4Fe-4S ferredoxin-type domains follow at residues 124–158 (PEDYQDTKKLRGCIECFSCISSCPVIKESTEYAGP) and 178–209 (AAGGVEEGLYCCTTCGKCAEVCPKELNVPGDA). Residues C136, C139, C142, C146, C189, C192, C195, and C199 each coordinate [4Fe-4S] cluster.

Subunit B of the heterodimeric fumarate reductase of methanogenic Archaea, composed of subunits A (TfrA) and B (TfrB). The cofactor is [2Fe-2S] cluster. [4Fe-4S] cluster serves as cofactor.

It localises to the cytoplasm. It carries out the reaction coenzyme B + coenzyme M + fumarate = coenzyme M-coenzyme B heterodisulfide + succinate. Catalyzes the reduction of fumarate with reduced coenzyme M (CoM-S-H) and coenzyme B (CoB-S-H). In vitro, is able to reduces fumarate with reduced benzyl viologen, oxidize CoM-S-H and CoB-S-H to CoM-S-S-CoB with methylene blue, and reduce CoM-S-S-CoB with reduced benzyl viologen. The enzyme has specificity for the two thiol compounds as the CoB--CoM heterodisulfide reductase. The enzyme is very sensitive to oxygen. This chain is Fumarate reductase (CoM/CoB) subunit B, found in Methanothermobacter marburgensis (strain ATCC BAA-927 / DSM 2133 / JCM 14651 / NBRC 100331 / OCM 82 / Marburg) (Methanobacterium thermoautotrophicum).